The following is a 417-amino-acid chain: Cell division protein FtsA (417 aa).

The protein belongs to the FtsA/MreB family. In terms of assembly, self-interacts. Interacts with FtsZ.

It localises to the cell inner membrane. Cell division protein that is involved in the assembly of the Z ring. May serve as a membrane anchor for the Z ring. In Pseudomonas aeruginosa (strain ATCC 15692 / DSM 22644 / CIP 104116 / JCM 14847 / LMG 12228 / 1C / PRS 101 / PAO1), this protein is Cell division protein FtsA.